Reading from the N-terminus, the 428-residue chain is Light-independent protochlorophyllide reductase subunit N (428 aa).

[4Fe-4S] cluster contacts are provided by Cys29, Cys54, and Cys115.

This sequence belongs to the BchN/ChlN family. Protochlorophyllide reductase is composed of three subunits; BchL, BchN and BchB. Forms a heterotetramer of two BchB and two BchN subunits. [4Fe-4S] cluster is required as a cofactor.

It carries out the reaction chlorophyllide a + oxidized 2[4Fe-4S]-[ferredoxin] + 2 ADP + 2 phosphate = protochlorophyllide a + reduced 2[4Fe-4S]-[ferredoxin] + 2 ATP + 2 H2O. Its pathway is porphyrin-containing compound metabolism; bacteriochlorophyll biosynthesis (light-independent). Functionally, component of the dark-operative protochlorophyllide reductase (DPOR) that uses Mg-ATP and reduced ferredoxin to reduce ring D of protochlorophyllide (Pchlide) to form chlorophyllide a (Chlide). This reaction is light-independent. The NB-protein (BchN-BchB) is the catalytic component of the complex. This Cereibacter sphaeroides (strain ATCC 17029 / ATH 2.4.9) (Rhodobacter sphaeroides) protein is Light-independent protochlorophyllide reductase subunit N.